Here is a 356-residue protein sequence, read N- to C-terminus: S-adenosylmethionine:tRNA ribosyltransferase-isomerase (356 aa).

It belongs to the QueA family. Monomer.

The protein localises to the cytoplasm. The enzyme catalyses 7-aminomethyl-7-carbaguanosine(34) in tRNA + S-adenosyl-L-methionine = epoxyqueuosine(34) in tRNA + adenine + L-methionine + 2 H(+). Its pathway is tRNA modification; tRNA-queuosine biosynthesis. Its function is as follows. Transfers and isomerizes the ribose moiety from AdoMet to the 7-aminomethyl group of 7-deazaguanine (preQ1-tRNA) to give epoxyqueuosine (oQ-tRNA). The sequence is that of S-adenosylmethionine:tRNA ribosyltransferase-isomerase from Yersinia pseudotuberculosis serotype O:3 (strain YPIII).